A 69-amino-acid chain; its full sequence is Pleurain-A2 (69 aa).

The N-terminal stretch at 1–22 (MFTLKKTLLLLYFLGTISISLC) is a signal peptide. Residues 23 to 43 (KQERDADEDDGRKMTEEEVKR) constitute a propeptide that is removed on maturation. A disulfide bridge connects residues Cys63 and Cys69.

Expressed by the skin glands.

It localises to the secreted. Functionally, antimicrobial peptide. Has activity against the Gram-positive bacterium S.aureus ATCC2592 (MIC=15 ug/ml), the Gram-negative bacteria E.coli ATCC25922 (MIC=60 ug/ml), B.dysenteriae (MIC=60 ug/ml), H.pylori NTCT11637 (MIC=30 ug/ml), and the fungus C.albicans ATCC2002 (MIC=30 ug/ml). Has little hemolytic activity on rabbit red blood cells. The polypeptide is Pleurain-A2 (Nidirana pleuraden (Yunnan pond frog)).